A 242-amino-acid polypeptide reads, in one-letter code: Large ribosomal subunit protein uL1 (242 aa).

It belongs to the universal ribosomal protein uL1 family. Part of the 50S ribosomal subunit.

Functionally, binds directly to 23S rRNA. The L1 stalk is quite mobile in the ribosome, and is involved in E site tRNA release. Protein L1 is also a translational repressor protein, it controls the translation of the L11 operon by binding to its mRNA. In Streptomyces sp. (strain FRI-5), this protein is Large ribosomal subunit protein uL1.